The sequence spans 185 residues: Elongation factor P (185 aa).

Belongs to the elongation factor P family.

It is found in the cytoplasm. Its pathway is protein biosynthesis; polypeptide chain elongation. Involved in peptide bond synthesis. Stimulates efficient translation and peptide-bond synthesis on native or reconstituted 70S ribosomes in vitro. Probably functions indirectly by altering the affinity of the ribosome for aminoacyl-tRNA, thus increasing their reactivity as acceptors for peptidyl transferase. The protein is Elongation factor P of Dictyoglomus thermophilum (strain ATCC 35947 / DSM 3960 / H-6-12).